Here is a 196-residue protein sequence, read N- to C-terminus: Venom platylysin (196 aa).

The protein belongs to the redulysin-like family. Expressed by the venom gland.

It localises to the secreted. Its function is as follows. Probable insecticidal toxin that has been detected in a semi-pure insecticidal fraction. In Platymeris biguttatus (Two-spotted assassin bug), this protein is Venom platylysin.